The chain runs to 98 residues: Cuticle protein 67, isoform A (98 aa).

6 repeat units span residues Ala7–Ala10, Ala15–Ala18, Ala22–Ala25, Ala79–Ala82, Ala86–Ala89, and Ala92–Ala95.

In terms of biological role, component of the cuticle of migratory locust which contains more than 100 different structural proteins. The sequence is that of Cuticle protein 67, isoform A from Locusta migratoria (Migratory locust).